The sequence spans 442 residues: UDP-N-acetylmuramate--L-alanine ligase (442 aa).

An ATP-binding site is contributed by glycine 109–serine 115.

This sequence belongs to the MurCDEF family.

It is found in the cytoplasm. The catalysed reaction is UDP-N-acetyl-alpha-D-muramate + L-alanine + ATP = UDP-N-acetyl-alpha-D-muramoyl-L-alanine + ADP + phosphate + H(+). Its pathway is cell wall biogenesis; peptidoglycan biosynthesis. In terms of biological role, cell wall formation. In Streptococcus pyogenes serotype M6 (strain ATCC BAA-946 / MGAS10394), this protein is UDP-N-acetylmuramate--L-alanine ligase.